A 333-amino-acid chain; its full sequence is NADH-quinone oxidoreductase subunit H (333 aa).

8 consecutive transmembrane segments (helical) span residues 15 to 35 (FFIF…FVTY), 88 to 108 (FILA…VIPF), 117 to 137 (IGVG…GVVT), 159 to 179 (ISYE…AGSL), 191 to 211 (VWYI…AVAE), 239 to 259 (WAFF…LITV), 272 to 294 (GFIP…LIWF), and 313 to 333 (ILLP…ELFF).

Belongs to the complex I subunit 1 family. In terms of assembly, NDH-1 is composed of 14 different subunits. Subunits NuoA, H, J, K, L, M, N constitute the membrane sector of the complex.

The protein resides in the cell membrane. It carries out the reaction a quinone + NADH + 5 H(+)(in) = a quinol + NAD(+) + 4 H(+)(out). Its function is as follows. NDH-1 shuttles electrons from NADH, via FMN and iron-sulfur (Fe-S) centers, to quinones in the respiratory chain. The immediate electron acceptor for the enzyme in this species is believed to be ubiquinone. Couples the redox reaction to proton translocation (for every two electrons transferred, four hydrogen ions are translocated across the cytoplasmic membrane), and thus conserves the redox energy in a proton gradient. This subunit may bind ubiquinone. This Bacillus mycoides (strain KBAB4) (Bacillus weihenstephanensis) protein is NADH-quinone oxidoreductase subunit H.